A 306-amino-acid chain; its full sequence is Mitochondrial brown fat uncoupling protein 1 (306 aa).

Residues Met1–Ala10 lie on the Mitochondrial intermembrane side of the membrane. A helical transmembrane segment spans residues Pro11–Phe32. Solcar repeat units follow at residues Pro11 to Phe102, Pro110 to Ala200, and Asp209 to Glu294. Over Pro33–Lys73 the chain is Mitochondrial matrix. Lys56 serves as a coordination point for fatty acid 16:0. The chain crosses the membrane as a helical span at residues Leu74 to Tyr96. At Asp97–Lys115 the chain is on the mitochondrial intermembrane side. A helical transmembrane segment spans residues Ile116–Pro132. At Thr133–Thr177 the chain is on the mitochondrial matrix side. A helical membrane pass occupies residues Pro178 to Tyr194. At Asp195–Val211 the chain is on the mitochondrial intermembrane side. A helical transmembrane segment spans residues Pro212–Pro231. Residues Val232–Ala265 lie on the Mitochondrial matrix side of the membrane. A Cysteine sulfenic acid (-SOH) modification is found at Cys253. A helical membrane pass occupies residues Phe266–Phe288. A fatty acid 16:0-binding site is contributed by Lys268. Residues Glu289–Thr306 are Mitochondrial intermembrane-facing.

The protein belongs to the mitochondrial carrier (TC 2.A.29) family. In terms of assembly, most probably functions as a monomer. Binds one purine nucleotide per monomer. However, has also been suggested to function as a homodimer or a homotetramer. Tightly associates with cardiolipin in the mitochondrion inner membrane; may stabilize and regulate its activity. In terms of processing, may undergo sulfenylation upon cold exposure. May increase the sensitivity of UCP1 thermogenic function to the activation by noradrenaline probably through structural effects. Post-translationally, may undergo ubiquitin-mediated proteasomal degradation.

It is found in the mitochondrion inner membrane. The catalysed reaction is H(+)(in) = H(+)(out). Has no constitutive proton transporter activity and has to be activated by long-chain fatty acids/LCFAs. Inhibited by purine nucleotides. Both purine nucleotides and LCFAs bind the cytosolic side of the transporter and directly compete to activate or inhibit it. Activated by noradrenaline and reactive oxygen species. Despite lacking canonical translational encoding for selenocysteine, a small pool of the protein has been observed to selectively incorporate selenocysteine at 'Cys-253'. Selenocysteine-modified protein is highly sensitive to redox modification and may constitute a pool of protein highly sensitive to activation by elevated levels of reactive oxygen species (ROS). Its function is as follows. Mitochondrial protein responsible for thermogenic respiration, a specialized capacity of brown adipose tissue and beige fat that participates in non-shivering adaptive thermogenesis to temperature and diet variations and more generally to the regulation of energy balance. Functions as a long-chain fatty acid/LCFA and proton symporter, simultaneously transporting one LCFA and one proton through the inner mitochondrial membrane. However, LCFAs remaining associated with the transporter via their hydrophobic tails, it results in an apparent transport of protons activated by LCFAs. Thereby, dissipates the mitochondrial proton gradient and converts the energy of substrate oxydation into heat instead of ATP. Regulates the production of reactive oxygen species/ROS by mitochondria. The polypeptide is Mitochondrial brown fat uncoupling protein 1 (Ochotona dauurica (Daurian pika)).